The chain runs to 557 residues: MPPEADGPQVLIAGAGPVGLTLAHELTRRRVRVRVIDRADGPATTSRALAVHPRTLEACHQMGLADALVARGRPVVHFTVHLRGRQLIRFDTNYGRLPTAYPFSLMLDQVRTEEILRERLAGLGVGIEWGVELADCAPCGDRVNAELRRDGRSEQVTVPWLVGADGSRSTVRERLGLRLVGDATQTWLNADVVLDADLSRDSNHLVHTGSGTVLLVPFPDPGKWRAVDTGYAGQGADPETVRRRLAGSLARGLGRPVAVSEPTWVSVFRVQQRMITAMRSGRCFVAGDAAHVHSPASGQGMNTGMQDAYNLAWKLADVVRGHAREELLDTYAAERIPVGGRLLSSTRTATALVALRNAVAPVAMPVGLSFLKAVRPLKRRVEHRIMAGMSGLALHYADSPLTYGTGDGAAGVHPGHLVACTEQDVARHPGLRALRQALTDPRWLLLLFADDGGAAELALRYGRAVQIRTVIPHEDEDGPALADPDDALRQTLGVPPGGWALIRPDGYLAAKGQRSGTTTLTARLQALHLLPEDTAPGAGDSAGRPAPDGTRRGVTTE.

Residues 9 to 38 (QVLI…VIDR) and 278 to 288 (MRSGRCFVAGD) contribute to the FAD site. The interval 530–557 (LPEDTAPGAGDSAGRPAPDGTRRGVTTE) is disordered.

This sequence belongs to the PheA/TfdB FAD monooxygenase family. Requires FAD as cofactor.

The catalysed reaction is 6-methylpretetramide + NADPH + O2 + 2 H(+) = 4-hydroxy-6-methylpretetramide + NADP(+) + H2O. The enzyme catalyses 4-hydroxy-6-methylpretetramide + NADPH + O2 = 4-dedimethylamino-4-oxo-anhydrotetracycline + NADP(+) + H2O. Its pathway is antibiotic biosynthesis; oxytetracycline biosynthesis. Involved in the biosynthesis of the tetracycline antibiotic, oxytetracycline. Catalyzes the double hydroxylation of 6-methylpretetramide to yield 4-keto-anhydrotetracycline, via the insertion of oxygen atoms at the C-12a and C-4 positions of 6-pretetramid. The chain is 6-methylpretetramide 4-monooxygenase from Streptomyces rimosus.